A 74-amino-acid chain; its full sequence is Molt-inhibiting hormone (74 aa).

Gln1 carries the pyrrolidone carboxylic acid modification. 3 disulfides stabilise this stretch: Cys7/Cys43, Cys23/Cys39, and Cys26/Cys52. The residue at position 72 (Val72) is a Valine amide.

Its subcellular location is the secreted. In terms of biological role, inhibits Y-organs where molting hormone (ecdysteroid) is secreted. A molting cycle is initiated when MIH secretion diminishes or stops. This chain is Molt-inhibiting hormone, found in Procambarus bouvieri (Mexican crayfish).